Reading from the N-terminus, the 363-residue chain is Chorismate synthase (363 aa).

Arg-47 contacts NADP(+). FMN contacts are provided by residues 124–126, Gly-285, 300–304, and Arg-326; these read RSS and KPTAT.

It belongs to the chorismate synthase family. As to quaternary structure, homotetramer. It depends on FMNH2 as a cofactor.

It catalyses the reaction 5-O-(1-carboxyvinyl)-3-phosphoshikimate = chorismate + phosphate. The protein operates within metabolic intermediate biosynthesis; chorismate biosynthesis; chorismate from D-erythrose 4-phosphate and phosphoenolpyruvate: step 7/7. Catalyzes the anti-1,4-elimination of the C-3 phosphate and the C-6 proR hydrogen from 5-enolpyruvylshikimate-3-phosphate (EPSP) to yield chorismate, which is the branch point compound that serves as the starting substrate for the three terminal pathways of aromatic amino acid biosynthesis. This reaction introduces a second double bond into the aromatic ring system. This chain is Chorismate synthase, found in Opitutus terrae (strain DSM 11246 / JCM 15787 / PB90-1).